We begin with the raw amino-acid sequence, 248 residues long: Metallo-beta-lactamase type 2 (248 aa).

The N-terminal stretch at 1-21 (MKGLKGLLVLALGFTGLQVFG) is a signal peptide. Positions 97, 99, 101, 160, and 179 each coordinate Zn(2+). Residue Lys182 coordinates substrate. His221 contributes to the Zn(2+) binding site.

This sequence belongs to the metallo-beta-lactamase superfamily. Class-B beta-lactamase family. As to quaternary structure, monomer. The cofactor is Zn(2+).

It is found in the periplasm. It carries out the reaction a beta-lactam + H2O = a substituted beta-amino acid. In terms of biological role, confers resistance to the different beta-lactams antibiotics (penicillin, cephalosporin and carbapenem) via the hydrolysis of the beta-lactam ring. The sequence is that of Metallo-beta-lactamase type 2 (blaB7) from Elizabethkingia meningoseptica (Chryseobacterium meningosepticum).